Consider the following 67-residue polypeptide: Conotoxin mr3d (67 aa).

Residues 1–19 (MSKLGILLTICLLLFPLTA) form the signal peptide. Positions 20-52 (VPLDGDQPADRPAERMQDDISSEHHPFFDPVKR) are excised as a propeptide. 3 disulfides stabilise this stretch: cysteine 53/cysteine 65, cysteine 54/cysteine 62, and cysteine 58/cysteine 66. Position 64 is a 4-hydroxyproline; partial (proline 64). Cysteine 66 is modified (cysteine amide; partial).

This sequence belongs to the conotoxin M superfamily. In terms of processing, has been found to be hydroxylated and amidated by Han et al. (2006), and to be unmodified by Ju et al. (2022). Expressed by the venom duct.

The protein resides in the secreted. This is Conotoxin mr3d from Conus marmoreus (Marble cone).